The following is a 201-amino-acid chain: Protocatechuate 3,4-dioxygenase alpha chain (201 aa).

A 3,4-dihydroxybenzoate-binding site is contributed by arginine 134.

The protein belongs to the intradiol ring-cleavage dioxygenase family. The enzyme is an oligomer of 12 copies of the alpha and beta chains. It depends on Fe(3+) as a cofactor.

The catalysed reaction is 3,4-dihydroxybenzoate + O2 = 3-carboxy-cis,cis-muconate + 2 H(+). It participates in aromatic compound metabolism; beta-ketoadipate pathway; 3-carboxy-cis,cis-muconate from 3,4-dihydroxybenzoate: step 1/1. Plays an essential role in the utilization of numerous aromatic and hydroaromatic compounds via the beta-ketoadipate pathway. The chain is Protocatechuate 3,4-dioxygenase alpha chain (pcaG) from Pseudomonas putida (Arthrobacter siderocapsulatus).